We begin with the raw amino-acid sequence, 236 residues long: Small ribosomal subunit protein uS3 (236 aa).

The KH type-2 domain maps to 39 to 107; the sequence is VRQFLTKELK…PAQINISEVR (69 aa).

This sequence belongs to the universal ribosomal protein uS3 family. Part of the 30S ribosomal subunit. Forms a tight complex with proteins S10 and S14.

Its function is as follows. Binds the lower part of the 30S subunit head. Binds mRNA in the 70S ribosome, positioning it for translation. The chain is Small ribosomal subunit protein uS3 from Aeromonas salmonicida (strain A449).